Reading from the N-terminus, the 295-residue chain is Bifunctional protein FolD (295 aa).

NADP(+)-binding positions include 165–167 (GRG), Ser192, and Ile233.

The protein belongs to the tetrahydrofolate dehydrogenase/cyclohydrolase family. In terms of assembly, homodimer.

The enzyme catalyses (6R)-5,10-methylene-5,6,7,8-tetrahydrofolate + NADP(+) = (6R)-5,10-methenyltetrahydrofolate + NADPH. It catalyses the reaction (6R)-5,10-methenyltetrahydrofolate + H2O = (6R)-10-formyltetrahydrofolate + H(+). Its pathway is one-carbon metabolism; tetrahydrofolate interconversion. Functionally, catalyzes the oxidation of 5,10-methylenetetrahydrofolate to 5,10-methenyltetrahydrofolate and then the hydrolysis of 5,10-methenyltetrahydrofolate to 10-formyltetrahydrofolate. The protein is Bifunctional protein FolD of Tropheryma whipplei (strain TW08/27) (Whipple's bacillus).